A 323-amino-acid polypeptide reads, in one-letter code: Cyclin-H (323 aa).

Ser-5 is modified (phosphoserine; by CDK8). Ser-132 is modified (phosphoserine). A disordered region spans residues 299-323 (DDDYVPKKSKHEEEEWTDDDLVESL). Positions 302–311 (YVPKKSKHEE) are enriched in basic and acidic residues. The span at 312–323 (EEWTDDDLVESL) shows a compositional bias: acidic residues. Phosphothreonine is present on Thr-315. Position 322 is a phosphoserine (Ser-322).

The protein belongs to the cyclin family. Cyclin C subfamily. As to quaternary structure, associates primarily with CDK7 and MAT1 to form the CAK complex. CAK can further associate with the core-TFIIH to form the TFIIH basal transcription factor.

The protein localises to the nucleus. Functionally, regulates CDK7, the catalytic subunit of the CDK-activating kinase (CAK) enzymatic complex. CAK activates the cyclin-associated kinases CDK1, CDK2, CDK4 and CDK6 by threonine phosphorylation. CAK complexed to the core-TFIIH basal transcription factor activates RNA polymerase II by serine phosphorylation of the repetitive C-terminal domain (CTD) of its large subunit (POLR2A), allowing its escape from the promoter and elongation of the transcripts. Involved in cell cycle control and in RNA transcription by RNA polymerase II. Its expression and activity are constant throughout the cell cycle. In Macaca fascicularis (Crab-eating macaque), this protein is Cyclin-H (CCNH).